A 586-amino-acid polypeptide reads, in one-letter code: Phosphomethylpyrimidine synthase (586 aa).

2 disordered regions span residues 38–59 (IELS…TSGP) and 92–114 (GREI…VFPQ). The span at 92-102 (GREIKPEDDGV) shows a compositional bias: basic and acidic residues. Residues Asn-193, Met-222, Tyr-251, His-287, 307–309 (SRG), 348–351 (DGLR), and Glu-387 each bind substrate. His-391 provides a ligand contact to Zn(2+). Tyr-414 contacts substrate. His-455 provides a ligand contact to Zn(2+). Positions 535, 538, and 543 each coordinate [4Fe-4S] cluster.

Belongs to the ThiC family. It depends on [4Fe-4S] cluster as a cofactor.

It catalyses the reaction 5-amino-1-(5-phospho-beta-D-ribosyl)imidazole + S-adenosyl-L-methionine = 4-amino-2-methyl-5-(phosphooxymethyl)pyrimidine + CO + 5'-deoxyadenosine + formate + L-methionine + 3 H(+). The protein operates within cofactor biosynthesis; thiamine diphosphate biosynthesis. Its function is as follows. Catalyzes the synthesis of the hydroxymethylpyrimidine phosphate (HMP-P) moiety of thiamine from aminoimidazole ribotide (AIR) in a radical S-adenosyl-L-methionine (SAM)-dependent reaction. This chain is Phosphomethylpyrimidine synthase, found in Bacillus cytotoxicus (strain DSM 22905 / CIP 110041 / 391-98 / NVH 391-98).